Consider the following 417-residue polypeptide: MFSKQDQIQGYDDALLSAMNAEEQRQEDHIELIASENYTSKRVMQAQGSGLTNKYAEGYPGKRYYGGCEHVDKVEQLAIERARQLFGADYANVQPHSGSQANAAVYLALLQAGDTVLGMSLAHGGHLTHGAKVSFSGKLYNAVQYGIDTTTGLIDYDEVERIAVECQPKMLIAGFSAYSKTLDFPRFRAIADKVGAYLFVDMAHVAGLVAAGLYPNPLPYADVVTTTTHKTLRGPRGGLILAKANEELEKKFNSAVFPGGQGGPLMHVIAAKAVCFKEAMEPGFKTYQQQVIDNAQAMAQVFITRGFDVVSGGTDNHLFLVSLIRQGLTGKEADAALGRAHITVNKNSVPNDPQSPFVTSGLRIGTPAVTTRGFKVTQCIELAGWICDILDNLGAADVEANVASQVAALCADFPVYR.

Residues L121 and G125 to L127 contribute to the (6S)-5,6,7,8-tetrahydrofolate site. Residue K230 is modified to N6-(pyridoxal phosphate)lysine. Residue S355–F357 coordinates (6S)-5,6,7,8-tetrahydrofolate.

This sequence belongs to the SHMT family. Homodimer. It depends on pyridoxal 5'-phosphate as a cofactor.

It localises to the cytoplasm. It carries out the reaction (6R)-5,10-methylene-5,6,7,8-tetrahydrofolate + glycine + H2O = (6S)-5,6,7,8-tetrahydrofolate + L-serine. The protein operates within one-carbon metabolism; tetrahydrofolate interconversion. Its pathway is amino-acid biosynthesis; glycine biosynthesis; glycine from L-serine: step 1/1. Functionally, catalyzes the reversible interconversion of serine and glycine with tetrahydrofolate (THF) serving as the one-carbon carrier. This reaction serves as the major source of one-carbon groups required for the biosynthesis of purines, thymidylate, methionine, and other important biomolecules. Also exhibits THF-independent aldolase activity toward beta-hydroxyamino acids, producing glycine and aldehydes, via a retro-aldol mechanism. This chain is Serine hydroxymethyltransferase 1, found in Pseudomonas syringae pv. tomato (strain ATCC BAA-871 / DC3000).